The primary structure comprises 237 residues: tRNA (guanine-N(7)-)-methyltransferase (237 aa).

Residues glutamate 68, glutamate 93, aspartate 120, and aspartate 143 each contribute to the S-adenosyl-L-methionine site. Residue aspartate 143 is part of the active site. Substrate contacts are provided by residues lysine 147, aspartate 179, and 216–219 (TKFE).

Belongs to the class I-like SAM-binding methyltransferase superfamily. TrmB family.

It carries out the reaction guanosine(46) in tRNA + S-adenosyl-L-methionine = N(7)-methylguanosine(46) in tRNA + S-adenosyl-L-homocysteine. It functions in the pathway tRNA modification; N(7)-methylguanine-tRNA biosynthesis. In terms of biological role, catalyzes the formation of N(7)-methylguanine at position 46 (m7G46) in tRNA. In Shewanella halifaxensis (strain HAW-EB4), this protein is tRNA (guanine-N(7)-)-methyltransferase.